The chain runs to 973 residues: Ras-related protein Rab-44 (973 aa).

Residues 1–21 (MEKGKGVSRKGRKLASSRRRQ) show a composition bias toward basic residues. The segment at 1-42 (MEKGKGVSRKGRKLASSRRRQAREPADGQDAPVAAEAESWPS) is disordered. The EF-hand domain maps to 77 to 111 (GGEEPQMIFDWVDVESRGHLSLEEFSSGLKNVFGS). The tract at residues 112-140 (SPGTHRLRTKRSLPSQRESVTSTLPVPEE) is disordered. Residues 123–135 (SLPSQRESVTSTL) show a composition bias toward polar residues. The stretch at 219-310 (LYKVRQLYEE…ERDLAGQLEE (92 aa)) forms a coiled coil. Disordered stretches follow at residues 319-368 (RGHL…FGNN), 421-481 (FSQE…GSFL), 493-708 (GTVE…GLAV), and 724-779 (EAQP…GKPQ). Over residues 428–440 (DPDPGPRGSPEVP) the composition is skewed to pro residues. Residues 445–457 (KDGKGVEDPKGQD) show a composition bias toward basic and acidic residues. The span at 513-524 (GLSSSPQSPAGS) shows a compositional bias: low complexity. 3 stretches are compositionally biased toward basic and acidic residues: residues 548–559 (SLEREVMAEDLK), 598–608 (HLARQESHAKG), and 654–663 (SESHGLEARS). Positions 665–680 (ESPQQDDPLPNTSQPP) are enriched in polar residues. Over residues 750-766 (AESRPEDPRTDLQEAER) the composition is skewed to basic and acidic residues. GTP contacts are provided by residues 792–799 (GDSNVGKT), 840–844 (DTAGQ), and 898–901 (NKMD). 2 S-geranylgeranyl cysteine lipidation sites follow: cysteine 971 and cysteine 972.

This sequence belongs to the small GTPase superfamily. Rab family.

It localises to the cell membrane. This chain is Ras-related protein Rab-44 (Rab44), found in Mus musculus (Mouse).